A 336-amino-acid chain; its full sequence is Anthranilate phosphoribosyltransferase (336 aa).

5-phospho-alpha-D-ribose 1-diphosphate is bound by residues glycine 83, glycine 86–aspartate 87, threonine 91, asparagine 93–threonine 96, lysine 111–serine 119, and serine 123. Residue glycine 83 coordinates anthranilate. A Mg(2+)-binding site is contributed by serine 95. Asparagine 114 provides a ligand contact to anthranilate. Arginine 169 provides a ligand contact to anthranilate. 2 residues coordinate Mg(2+): aspartate 227 and glutamate 228.

This sequence belongs to the anthranilate phosphoribosyltransferase family. Homodimer. Mg(2+) is required as a cofactor.

The enzyme catalyses N-(5-phospho-beta-D-ribosyl)anthranilate + diphosphate = 5-phospho-alpha-D-ribose 1-diphosphate + anthranilate. Its pathway is amino-acid biosynthesis; L-tryptophan biosynthesis; L-tryptophan from chorismate: step 2/5. In terms of biological role, catalyzes the transfer of the phosphoribosyl group of 5-phosphorylribose-1-pyrophosphate (PRPP) to anthranilate to yield N-(5'-phosphoribosyl)-anthranilate (PRA). The chain is Anthranilate phosphoribosyltransferase from Vibrio campbellii (strain ATCC BAA-1116).